A 292-amino-acid chain; its full sequence is UPF0696 protein C11orf68 (292 aa).

Low complexity predominate over residues 1-11; it reads MAAAAAAAVAG. The tract at residues 1–60 is disordered; the sequence is MAAAAAAAVAGVGRGGGGAEPRQERSRARGWAGVERSEGRRMEPGEELEEEGSPGGREDG. Omega-N-methylarginine is present on R29. Residues 35 to 44 are compositionally biased toward basic and acidic residues; the sequence is ERSEGRRMEP.

It belongs to the UPF0696 family.

The protein is UPF0696 protein C11orf68 (C11orf68) of Homo sapiens (Human).